We begin with the raw amino-acid sequence, 602 residues long: MSKIIGIDLGTTNSCIAVLSNGKPQVIENSEGGRTTPSVVGYTEDNRIIVGLPAKRQAITNPKNTLYAIKRLIGRKFKDDIVQKDIKMVPYKIISSENGDAWVEVKDKKLAPPQISAEILKKMKITAENFLNEKVTKAVITVPAYFNDSQRQATKDAGKIAGLEVLRIINEPTAAALAYGLDKKKNDRIIAVYDLGGGTFDISIIEIANVDGETQFEVLSTNGDTFLGGEDFDIRIINNLIYEFKIENGINLSGDSLAMQRLKEAAEKAKIELSSVEQTDINLPYITADKNGPKHLNIKITRSKLESLVEDLILKSLKPCEIALNDAKISKNKIDEIILVGGQTRMPLVQKMVSDFFEKVVKKDINPDEAVAIGASVQAGVLSGVVKDVLLLDVTPLTLGIETMGGIMTPLIEKNTTIPTKKTQVFSTAEDNQTSVTIHTLQGERKKALQNKSLGKFDLNNISPAPRGVPQIEVSFDLDANGILNVTAKDKKTGVEQSIVIKSSGGLSELEIENMIKDAEANLEIDKKFEELVKCRNEADSTISIVKKKLKDENLKILDEERVSIEKSISNLELLIKGDDIDSIKKENEELLKLSDNIIKKK.

Thr-199 carries the phosphothreonine; by autocatalysis modification.

Belongs to the heat shock protein 70 family.

Acts as a chaperone. The polypeptide is Chaperone protein DnaK (Carsonella ruddii (strain PV)).